We begin with the raw amino-acid sequence, 169 residues long: Histone H1.9 (169 aa).

Polar residues-rich tracts occupy residues Met1–Ser10 and Asp19–Asn36. Residues Met1 to Asn36 are disordered. The H15 domain occupies Arg43–Lys116. A phosphoserine mark is found at Ser62 and Ser65. A compositionally biased stretch (basic residues) spans Gln118–Ser142. Residues Gln118–Asn154 form a disordered region.

The protein belongs to the histone H1/H5 family.

It is found in the nucleus. The protein resides in the chromosome. DNA-binding protein that may be implicated in chromatin remodeling and/or transcriptional regulation during spermiogenesis, the process of spermatid maturation into spermatozoa. The sequence is that of Histone H1.9 from Rattus norvegicus (Rat).